The chain runs to 124 residues: Small ribosomal subunit protein bS6 (124 aa).

The tract at residues 93-124 is disordered; sequence KKAETGPSSMMKTVEREEARKAQQAEYAANNS. Residues 105–115 show a composition bias toward basic and acidic residues; that stretch reads TVEREEARKAQ.

It belongs to the bacterial ribosomal protein bS6 family.

Its function is as follows. Binds together with bS18 to 16S ribosomal RNA. The sequence is that of Small ribosomal subunit protein bS6 from Variovorax paradoxus (strain S110).